The sequence spans 158 residues: Glycine/sarcosine/betaine reductase complex component A (158 aa).

The active site involves Sec44. A non-standard amino acid (selenocysteine) is located at residue Sec44.

It belongs to the GrdA family. As to quaternary structure, monomer. Component of the glycine, sarcosine and betaine reductase complexes, together with components B and C.

The catalysed reaction is acetyl phosphate + [thioredoxin]-disulfide + NH4(+) + H2O = [thioredoxin]-dithiol + glycine + phosphate + H(+). It carries out the reaction acetyl phosphate + methylamine + [thioredoxin]-disulfide + H2O = sarcosine + [thioredoxin]-dithiol + phosphate + H(+). The enzyme catalyses acetyl phosphate + trimethylamine + [thioredoxin]-disulfide + H2O = glycine betaine + [thioredoxin]-dithiol + phosphate + H(+). Functionally, in the first step of glycine, betaine and sarcosine reductases, the substrate is bound to component PB via a Schiff base intermediate. Then the PB-activated substrate is nucleophilically attacked by the selenol anion of component PA to transform it to a carboxymethylated selenoether and the respective amine. By action of component PC, acetyl phosphate is formed, leaving component PA in its oxidized state. Finally component PA becomes reduced by the thioredoxin system to start a new catalytic cycle of reductive deamination. The polypeptide is Glycine/sarcosine/betaine reductase complex component A (Alkaliphilus metalliredigens (strain QYMF)).